A 119-amino-acid chain; its full sequence is Holo-[acyl-carrier-protein] synthase (119 aa).

Residues Asp-8 and Glu-58 each coordinate Mg(2+).

This sequence belongs to the P-Pant transferase superfamily. AcpS family. Requires Mg(2+) as cofactor.

The protein localises to the cytoplasm. It catalyses the reaction apo-[ACP] + CoA = holo-[ACP] + adenosine 3',5'-bisphosphate + H(+). Functionally, transfers the 4'-phosphopantetheine moiety from coenzyme A to a Ser of acyl-carrier-protein. The sequence is that of Holo-[acyl-carrier-protein] synthase from Bacillus thuringiensis subsp. konkukian (strain 97-27).